Consider the following 103-residue polypeptide: Cell division suppressor protein YneA (103 aa).

A LysM domain is found at 36-87 (VKIEVQSGDTLWGLADQVNDSKSIDKNAFIDWVTQHNDLASTEIQPGDILVI).

This sequence belongs to the YneA family.

The protein localises to the cytoplasm. Inhibits cell division during the SOS response. Affects a later stage of the cell division protein assembly, after the assembly of the Z ring, by probably suppressing recruitment of FtsL and/or DivIC to the division machinery. This is Cell division suppressor protein YneA from Bacillus pumilus (strain SAFR-032).